The following is a 193-amino-acid chain: dCTP deaminase (193 aa).

DCTP-binding positions include 110–115 (RSSLAR), D128, 136–138 (VLE), Y171, K178, and Q182. The active-site Proton donor/acceptor is E138.

It belongs to the dCTP deaminase family. As to quaternary structure, homotrimer.

It carries out the reaction dCTP + H2O + H(+) = dUTP + NH4(+). Its pathway is pyrimidine metabolism; dUMP biosynthesis; dUMP from dCTP (dUTP route): step 1/2. Its function is as follows. Catalyzes the deamination of dCTP to dUTP. The sequence is that of dCTP deaminase from Aeromonas hydrophila subsp. hydrophila (strain ATCC 7966 / DSM 30187 / BCRC 13018 / CCUG 14551 / JCM 1027 / KCTC 2358 / NCIMB 9240 / NCTC 8049).